A 388-amino-acid chain; its full sequence is Succinate--CoA ligase [ADP-forming] subunit beta (388 aa).

The region spanning 9 to 244 (KQLFAEYGLP…PSQDDAREAH (236 aa)) is the ATP-grasp domain. ATP-binding positions include Lys46, 53–55 (GRG), Glu99, Thr102, and Glu107. Residues Asn199 and Asp213 each contribute to the Mg(2+) site. Residues Asn264 and 321–323 (GIV) contribute to the substrate site.

Belongs to the succinate/malate CoA ligase beta subunit family. In terms of assembly, heterotetramer of two alpha and two beta subunits. Requires Mg(2+) as cofactor.

The catalysed reaction is succinate + ATP + CoA = succinyl-CoA + ADP + phosphate. It catalyses the reaction GTP + succinate + CoA = succinyl-CoA + GDP + phosphate. It participates in carbohydrate metabolism; tricarboxylic acid cycle; succinate from succinyl-CoA (ligase route): step 1/1. Its function is as follows. Succinyl-CoA synthetase functions in the citric acid cycle (TCA), coupling the hydrolysis of succinyl-CoA to the synthesis of either ATP or GTP and thus represents the only step of substrate-level phosphorylation in the TCA. The beta subunit provides nucleotide specificity of the enzyme and binds the substrate succinate, while the binding sites for coenzyme A and phosphate are found in the alpha subunit. In Pseudomonas aeruginosa (strain UCBPP-PA14), this protein is Succinate--CoA ligase [ADP-forming] subunit beta.